Consider the following 762-residue polypeptide: Phosphoribosylformylglycinamidine synthase subunit PurL (762 aa).

His-58 is a catalytic residue. ATP-binding residues include Tyr-61 and Arg-105. Glu-107 contributes to the Mg(2+) binding site. Residues 108-111 and Arg-130 contribute to the substrate site; that span reads SHNH. His-109 functions as the Proton acceptor in the catalytic mechanism. Residue Asp-131 coordinates Mg(2+). Gln-255 provides a ligand contact to substrate. Asp-283 provides a ligand contact to Mg(2+). Residue 327–329 coordinates substrate; it reads ESQ. ATP is bound by residues Asn-513 and Gly-550. Asn-551 provides a ligand contact to Mg(2+). A substrate-binding site is contributed by Ser-553.

It belongs to the FGAMS family. As to quaternary structure, monomer. Part of the FGAM synthase complex composed of 1 PurL, 1 PurQ and 2 PurS subunits.

It localises to the cytoplasm. The catalysed reaction is N(2)-formyl-N(1)-(5-phospho-beta-D-ribosyl)glycinamide + L-glutamine + ATP + H2O = 2-formamido-N(1)-(5-O-phospho-beta-D-ribosyl)acetamidine + L-glutamate + ADP + phosphate + H(+). It participates in purine metabolism; IMP biosynthesis via de novo pathway; 5-amino-1-(5-phospho-D-ribosyl)imidazole from N(2)-formyl-N(1)-(5-phospho-D-ribosyl)glycinamide: step 1/2. Part of the phosphoribosylformylglycinamidine synthase complex involved in the purines biosynthetic pathway. Catalyzes the ATP-dependent conversion of formylglycinamide ribonucleotide (FGAR) and glutamine to yield formylglycinamidine ribonucleotide (FGAM) and glutamate. The FGAM synthase complex is composed of three subunits. PurQ produces an ammonia molecule by converting glutamine to glutamate. PurL transfers the ammonia molecule to FGAR to form FGAM in an ATP-dependent manner. PurS interacts with PurQ and PurL and is thought to assist in the transfer of the ammonia molecule from PurQ to PurL. This is Phosphoribosylformylglycinamidine synthase subunit PurL from Corynebacterium glutamicum (strain ATCC 13032 / DSM 20300 / JCM 1318 / BCRC 11384 / CCUG 27702 / LMG 3730 / NBRC 12168 / NCIMB 10025 / NRRL B-2784 / 534).